The chain runs to 349 residues: Glycerol-1-phosphate dehydrogenase [NAD(P)+] (349 aa).

Residues 95-99 (GKSID) and 117-120 (TSPS) each bind NAD(+). Asp-122 contacts substrate. Ser-126 serves as a coordination point for NAD(+). Asp-169 is a binding site for substrate. Asp-169 and His-249 together coordinate Zn(2+). Residue His-253 coordinates substrate. Position 265 (His-265) interacts with Zn(2+).

Belongs to the glycerol-1-phosphate dehydrogenase family. As to quaternary structure, homodimer. The cofactor is Zn(2+).

It is found in the cytoplasm. The enzyme catalyses sn-glycerol 1-phosphate + NAD(+) = dihydroxyacetone phosphate + NADH + H(+). It catalyses the reaction sn-glycerol 1-phosphate + NADP(+) = dihydroxyacetone phosphate + NADPH + H(+). The protein operates within membrane lipid metabolism; glycerophospholipid metabolism. Catalyzes the NAD(P)H-dependent reduction of dihydroxyacetonephosphate (DHAP or glycerone phosphate) to glycerol 1-phosphate (G1P). The G1P thus generated is used as the glycerophosphate backbone of phospholipids in the cellular membranes of Archaea. The chain is Glycerol-1-phosphate dehydrogenase [NAD(P)+] from Hyperthermus butylicus (strain DSM 5456 / JCM 9403 / PLM1-5).